A 515-amino-acid chain; its full sequence is Serine/threonine-protein phosphatase PP-Z (515 aa).

A disordered region spans residues 1–186 (MGQGSSKHAD…SSTDPDDPET (186 aa)). Over residues 17–30 (PSFSRSDTQGSIKS) the composition is skewed to polar residues. S18 bears the Phosphoserine mark. Positions 40–51 (KGKDSNHDRRTS) are enriched in basic and acidic residues. Residues 63 to 74 (ETPPSLPPPPSP) show a composition bias toward pro residues. A compositionally biased stretch (polar residues) spans 91 to 109 (DSGNSSQSPTSPHPSNQPA). The segment covering 126–143 (SSSSYAVSPTSPTSPTSS) has biased composition (low complexity). Positions 248, 250, 276, and 308 each coordinate Mn(2+). H309 functions as the Proton donor in the catalytic mechanism. Residues H357 and H432 each coordinate Mn(2+). Phosphoserine is present on residues S505 and S514.

This sequence belongs to the PPP phosphatase family. PP-Z subfamily. The cofactor is Mn(2+).

The protein localises to the cytoplasm. The enzyme catalyses O-phospho-L-seryl-[protein] + H2O = L-seryl-[protein] + phosphate. It catalyses the reaction O-phospho-L-threonyl-[protein] + H2O = L-threonyl-[protein] + phosphate. This is Serine/threonine-protein phosphatase PP-Z (pzh1) from Schizosaccharomyces pombe (strain 972 / ATCC 24843) (Fission yeast).